A 206-amino-acid chain; its full sequence is Transmembrane emp24 domain-containing protein bai (206 aa).

Positions 1–20 are cleaved as a signal peptide; the sequence is MARAALIVCLLMACAWSSHA. Topologically, residues 21 to 172 are lumenal; sequence VMFKLSPNTQ…RDTNEKTNSR (152 aa). In terms of domain architecture, GOLD spans 30 to 140; the sequence is QKCLKEDIQA…LKPLEVDLKR (111 aa). A helical membrane pass occupies residues 173-193; that stretch reads VLFFSIFSMCCLLGLATWQVL. Residues 194–206 lie on the Cytoplasmic side of the membrane; that stretch reads YLRRYFKAKKLIE.

Belongs to the EMP24/GP25L family.

The protein localises to the membrane. Eca and bai are essential, though not redundant, for dorsoventral patterning of the embryo. Specifically required during early embryogenesis for the activity of maternal tkv, while the zygotic tkv is not affected. This chain is Transmembrane emp24 domain-containing protein bai, found in Drosophila erecta (Fruit fly).